The sequence spans 170 residues: Nucleoside-triphosphatase THEP1 (170 aa).

ATP-binding positions include 7 to 14 and 98 to 105; these read GMPGVGKT and IIIIDELG.

The protein belongs to the THEP1 NTPase family.

The enzyme catalyses a ribonucleoside 5'-triphosphate + H2O = a ribonucleoside 5'-diphosphate + phosphate + H(+). Has nucleotide phosphatase activity towards ATP, GTP, CTP, TTP and UTP. May hydrolyze nucleoside diphosphates with lower efficiency. In Methanocaldococcus jannaschii (strain ATCC 43067 / DSM 2661 / JAL-1 / JCM 10045 / NBRC 100440) (Methanococcus jannaschii), this protein is Nucleoside-triphosphatase THEP1.